A 486-amino-acid polypeptide reads, in one-letter code: uncharacterized protein (486 aa).

Residues Thr18 to Ile38 form a helical membrane-spanning segment. Positions Asp62–Phe79 are enriched in basic and acidic residues. Disordered stretches follow at residues Asp62 to Thr82 and Ile117 to Met147. Positions Ser119–Ser132 are enriched in low complexity. The next 3 helical transmembrane spans lie at Val324–Ile344, Ile365–Val385, and Met451–Ile471.

It belongs to the ABC-4 integral membrane protein family.

Its subcellular location is the cell membrane. This is an uncharacterized protein from Bacillus subtilis (strain 168).